The following is a 227-amino-acid chain: Cytidylate kinase (227 aa).

ATP is bound at residue 12–20 (GPSGAGKGT).

The protein belongs to the cytidylate kinase family. Type 1 subfamily.

It is found in the cytoplasm. The enzyme catalyses CMP + ATP = CDP + ADP. It catalyses the reaction dCMP + ATP = dCDP + ADP. The protein is Cytidylate kinase of Shigella flexneri.